The sequence spans 119 residues: MTMTKNDARKRRKVRIRKKIAGSTERPRLVVYRSNLHVYAQIVDDATGATLVATSTLAIGKAQAGAHCNKAGAELVGKEIARLAGEKSIKRVVFDRNGYLYHGRIKAVADGAREGGLEF.

It belongs to the universal ribosomal protein uL18 family. In terms of assembly, part of the 50S ribosomal subunit; part of the 5S rRNA/L5/L18/L25 subcomplex. Contacts the 5S and 23S rRNAs.

This is one of the proteins that bind and probably mediate the attachment of the 5S RNA into the large ribosomal subunit, where it forms part of the central protuberance. The polypeptide is Large ribosomal subunit protein uL18 (Nitratidesulfovibrio vulgaris (strain DSM 19637 / Miyazaki F) (Desulfovibrio vulgaris)).